A 170-amino-acid chain; its full sequence is Probable chorismate pyruvate-lyase (170 aa).

3 residues coordinate substrate: Arg77, Leu114, and Glu157.

It belongs to the UbiC family.

Its subcellular location is the cytoplasm. The enzyme catalyses chorismate = 4-hydroxybenzoate + pyruvate. The protein operates within cofactor biosynthesis; ubiquinone biosynthesis. Functionally, removes the pyruvyl group from chorismate, with concomitant aromatization of the ring, to provide 4-hydroxybenzoate (4HB) for the ubiquinone pathway. In Pasteurella multocida (strain Pm70), this protein is Probable chorismate pyruvate-lyase.